Here is a 250-residue protein sequence, read N- to C-terminus: 2,3-bisphosphoglycerate-dependent phosphoglycerate mutase (250 aa).

Residues 8 to 15, 21 to 22, Arg60, 87 to 90, Lys98, 114 to 115, and 183 to 184 contribute to the substrate site; these read RHGESQWN, TG, ERHY, RR, and GN. His9 acts as the Tele-phosphohistidine intermediate in catalysis. Glu87 acts as the Proton donor/acceptor in catalysis.

Belongs to the phosphoglycerate mutase family. BPG-dependent PGAM subfamily. As to quaternary structure, homodimer.

The enzyme catalyses (2R)-2-phosphoglycerate = (2R)-3-phosphoglycerate. It functions in the pathway carbohydrate degradation; glycolysis; pyruvate from D-glyceraldehyde 3-phosphate: step 3/5. Catalyzes the interconversion of 2-phosphoglycerate and 3-phosphoglycerate. The sequence is that of 2,3-bisphosphoglycerate-dependent phosphoglycerate mutase from Bordetella avium (strain 197N).